Consider the following 300-residue polypeptide: uncharacterized protein (300 aa).

Over 1 to 7 (MGSTRKG) the chain is Periplasmic. Residues 8-28 (MLNVLIAAVLWGSSGVCAQYI) form a helical membrane-spanning segment. Positions 16–145 (VLWGSSGVCA…SLIGTFLLVT (130 aa)) constitute an EamA 1 domain. Residues 29–45 (MEQSRMSSQFLTMIRLL) lie on the Cytoplasmic side of the membrane. A helical membrane pass occupies residues 46–66 (FAGLILVTFSFMHGDKIFSIL). The Periplasmic portion of the chain corresponds to 67-71 (KNRKD). The chain crosses the membrane as a helical span at residues 72–92 (ALSLLIFSVVGALTVQLTFLL). The Cytoplasmic segment spans residues 93 to 99 (TIEKSNA). A helical transmembrane segment spans residues 100–120 (ATATVLQFLSPTIIVAWFALA). The Periplasmic portion of the chain corresponds to 121-124 (RRTR). A helical transmembrane segment spans residues 125–145 (PGILVLTAILTSLIGTFLLVT). The Cytoplasmic portion of the chain corresponds to 146–151 (HGNPTS). A helical transmembrane segment spans residues 152–172 (LSISSAALFWGIASAFAAAFY). One can recognise an EamA 2 domain in the interval 167–291 (FAAAFYTTWP…ILSSVILISL (125 aa)). Residues 173-184 (TTWPSRLIAQYG) lie on the Periplasmic side of the membrane. The chain crosses the membrane as a helical span at residues 185–205 (TLPVVGWSMSFGGLILLPFYA). Topologically, residues 206 to 216 (KEGTHFAVSGS) are cytoplasmic. Residues 217–237 (LILAFFYLVVIGTSLTFSLYL) form a helical membrane-spanning segment. The Periplasmic segment spans residues 238-263 (KGAQLIGGPKASILSCAEPLSSALLS). The helical transmembrane segment at 264–284 (LLLLGISFTLPDWLGTLLILS) threads the bilayer. Residues 285–300 (SVILISLDSRRRARAA) are Cytoplasmic-facing.

The protein belongs to the EamA transporter family.

The protein localises to the cell inner membrane. This is an uncharacterized protein from Salmonella typhimurium (strain LT2 / SGSC1412 / ATCC 700720).